Here is a 325-residue protein sequence, read N- to C-terminus: MVAELEFEKPLIELRKKISELKEFMKSTDVDLSSEIEKLEARLAKLENDIYANLTPWDRVQIARHPNRPTTLDYIERLFTHFLECHGDRCFGDDEAIVGGIAKYDGLPVTVIGHQRGKDTKENIRRNFGMPHPEGYRKALRLMKQAEKFQRPIICFIDTKGAYPGKAAEERGQSEAIARNLFEMAGLTVPIVCIVIGEGGSGGALALGVGNHIHMLENSTYSVISPEGAAAILWKDASLAQRAAETMKITANDLKELGVIDEIIPEVRGGAHRDVDQQAAEIDKVLKRSLKQLLKLDGETLVQQRYEKFKQIGQFAFSRDDIWVR.

The region spanning 35–292 is the CoA carboxyltransferase C-terminal domain; sequence EIEKLEARLA…DKVLKRSLKQ (258 aa).

This sequence belongs to the AccA family. Acetyl-CoA carboxylase is a heterohexamer composed of biotin carboxyl carrier protein (AccB), biotin carboxylase (AccC) and two subunits each of ACCase subunit alpha (AccA) and ACCase subunit beta (AccD).

It is found in the cytoplasm. The catalysed reaction is N(6)-carboxybiotinyl-L-lysyl-[protein] + acetyl-CoA = N(6)-biotinyl-L-lysyl-[protein] + malonyl-CoA. It functions in the pathway lipid metabolism; malonyl-CoA biosynthesis; malonyl-CoA from acetyl-CoA: step 1/1. Functionally, component of the acetyl coenzyme A carboxylase (ACC) complex. First, biotin carboxylase catalyzes the carboxylation of biotin on its carrier protein (BCCP) and then the CO(2) group is transferred by the carboxyltransferase to acetyl-CoA to form malonyl-CoA. The sequence is that of Acetyl-coenzyme A carboxylase carboxyl transferase subunit alpha from Geobacillus sp. (strain WCH70).